A 478-amino-acid chain; its full sequence is ATP synthase subunit beta (478 aa).

Position 164 to 171 (164 to 171) interacts with ATP; the sequence is GGAGVGKT.

It belongs to the ATPase alpha/beta chains family. In terms of assembly, F-type ATPases have 2 components, CF(1) - the catalytic core - and CF(0) - the membrane proton channel. CF(1) has five subunits: alpha(3), beta(3), gamma(1), delta(1), epsilon(1). CF(0) has three main subunits: a(1), b(2) and c(9-12). The alpha and beta chains form an alternating ring which encloses part of the gamma chain. CF(1) is attached to CF(0) by a central stalk formed by the gamma and epsilon chains, while a peripheral stalk is formed by the delta and b chains.

The protein localises to the cell membrane. The enzyme catalyses ATP + H2O + 4 H(+)(in) = ADP + phosphate + 5 H(+)(out). Its function is as follows. Produces ATP from ADP in the presence of a proton gradient across the membrane. The catalytic sites are hosted primarily by the beta subunits. The polypeptide is ATP synthase subunit beta (Streptomyces avermitilis (strain ATCC 31267 / DSM 46492 / JCM 5070 / NBRC 14893 / NCIMB 12804 / NRRL 8165 / MA-4680)).